Reading from the N-terminus, the 556-residue chain is Arginine--tRNA ligase 2 (556 aa).

Positions 132-142 match the 'HIGH' region motif; sequence ANPTGDLHLGH.

This sequence belongs to the class-I aminoacyl-tRNA synthetase family. In terms of assembly, monomer.

It is found in the cytoplasm. The catalysed reaction is tRNA(Arg) + L-arginine + ATP = L-arginyl-tRNA(Arg) + AMP + diphosphate. The chain is Arginine--tRNA ligase 2 from Bacillus thuringiensis subsp. konkukian (strain 97-27).